Reading from the N-terminus, the 199-residue chain is Cell division protein SepF (199 aa).

The interval 15-79 is disordered; sequence TEDGDETEVQ…PQPQQKSSTE (65 aa).

The protein belongs to the SepF family. As to quaternary structure, homodimer. Interacts with FtsZ.

It localises to the cytoplasm. Cell division protein that is part of the divisome complex and is recruited early to the Z-ring. Probably stimulates Z-ring formation, perhaps through the cross-linking of FtsZ protofilaments. Its function overlaps with FtsA. The protein is Cell division protein SepF of Streptococcus sanguinis (strain SK36).